Consider the following 1333-residue polypeptide: NPC1-like intracellular cholesterol transporter 1 (1333 aa).

An N-terminal signal peptide occupies residues 1-20; that stretch reads MAAAWQGWLLWALLLNSAQG. Residues 21 to 284 are Extracellular-facing; it reads ELYTPTHKAG…SFYMGRMPGW (264 aa). Cystine bridges form between Cys-32–Cys-90, Cys-38–Cys-56, Cys-77–Cys-125, Cys-91–Cys-129, Cys-113–Cys-254, Cys-116–Cys-172, Cys-189–Cys-197, Cys-243–Cys-259, and Cys-256–Cys-263. A helical membrane pass occupies residues 285 to 305; it reads LALIIIFTAVFVLLSVVLVYL. Residues 306-352 are Cytoplasmic-facing; it reads RVASNRNKNKTAGSQEAPNLPRKRRFSPHTVLGRFFESWGTRVASWP. Residues 353 to 373 form a helical membrane-spanning segment; that stretch reads LTVLALSFIVVIALSVGLTFI. At 374–632 the chain is on the extracellular side; it reads ELTTDPVELW…DEINRTTIQD (259 aa). 2 disulfides stabilise this stretch: Cys-471–Cys-485 and Cys-525–Cys-542. Residues 632 to 797 form the SSD domain; it reads DLPVFAISYL…MTAFVALLSL (166 aa). A helical membrane pass occupies residues 633 to 653; that stretch reads LPVFAISYLIVFLYISLALGS. The Cytoplasmic segment spans residues 654–665; it reads YSRWSRVAVDSK. The chain crosses the membrane as a helical span at residues 666–686; sequence ATLGLGGVAVVLGAVVAAMGF. Topologically, residues 687–696 are extracellular; the sequence is YSYLGVPSSL. Residues 697-717 traverse the membrane as a helical segment; sequence VIIQVVPFLVLAVGADNIFIF. Residues 718–742 are Cytoplasmic-facing; that stretch reads VLEYQRLPRMPGEQREAHIGRTLGS. The helical transmembrane segment at 743-763 threads the bilayer; that stretch reads VAPSMLLCSLSEAICFFLGAL. The Extracellular portion of the chain corresponds to 764–776; the sequence is TSMPAVRTFALTS. A helical membrane pass occupies residues 777-797; that stretch reads GLAIIFDFLLQMTAFVALLSL. At 798–846 the chain is on the cytoplasmic side; the sequence is DSKRQEASRPDVVCCFSSRNLPPPKQKEGLLLCFFRKIYTPFLLHRFIR. Residues 847–867 form a helical membrane-spanning segment; the sequence is PVVLLLFLVLFGANLYLMCNI. Residues 868–1113 lie on the Extracellular side of the membrane; that stretch reads SVGLDQDLAL…QQYLTVLPEG (246 aa). 3 cysteine pairs are disulfide-bonded: Cys-920-Cys-925, Cys-967-Cys-1025, and Cys-981-Cys-990. The helical transmembrane segment at 1114–1134 threads the bilayer; it reads IFTLALCFVPTFVVCYLLLGL. Residues 1135–1142 are Cytoplasmic-facing; the sequence is DIRSGILN. Residues 1143-1163 traverse the membrane as a helical segment; that stretch reads LLSIIMILVDTIGLMAVWGIS. Topologically, residues 1164–1165 are extracellular; sequence YN. A helical transmembrane segment spans residues 1166-1186; that stretch reads AVSLINLVTAVGMSVEFVSHI. The Cytoplasmic portion of the chain corresponds to 1187–1206; that stretch reads TRSFAVSTKPTRLERAKDAT. A helical transmembrane segment spans residues 1207-1227; that stretch reads IFMGSAVFAGVAMTNFPGILI. Residues 1228 to 1242 lie on the Extracellular side of the membrane; it reads LGFAQAQLIQIFFFR. The helical transmembrane segment at 1243–1263 threads the bilayer; sequence LNLLITLLGLLHGLVFLPVVL. Topologically, residues 1264 to 1333 are cytoplasmic; it reads SYLGPDVNQA…SSLPKSDQKF (70 aa).

Belongs to the patched family. In terms of assembly, interacts with RAB11A, MYO5B and RAB11FIP2. Interaction with RAB11A, MYO5B and RAB11FIP2 is required for proper transport to the plasma membrane upon cholesterol depletion. Interacts with NPC2. Interacts with LIMA1. In terms of processing, highly glycosylated. In terms of tissue distribution, expressed in small intestine, stomach and muscle, along with detectable expression in lung, heart, gall bladder, brain, testis, skin and liver. Expression in liver is extremely low.

It is found in the apical cell membrane. The protein localises to the cell membrane. It carries out the reaction cholesterol(in) = cholesterol(out). The enzyme catalyses sitosterol(out) = sitosterol(in). Its function is as follows. Plays a major role in cholesterol homeostasis. Critical for the uptake of cholesterol across the plasma membrane of the intestinal enterocyte. Involved in plant sterol absorption, it transports sitosterol, although at lower rates than cholesterol. May have a function in the transport of multiple lipids and their homeostasis, thereby influencing lipid metabolism regulation. May be involved in caveolin trafficking from the plasma membrane. Acts as a negative regulator of NPC2 and down-regulates its expression and secretion by inhibiting its maturation and accelerating its degradation. The protein is NPC1-like intracellular cholesterol transporter 1 of Mus musculus (Mouse).